The primary structure comprises 393 residues: Stearoyl-[acyl-carrier-protein] 9-desaturase, chloroplastic (393 aa).

The N-terminal 30 residues, 1–30 (MALNINGVSLKSHKMLPFPCSSARSERVFM), are a transit peptide targeting the chloroplast. Fe cation-binding residues include glutamate 135, glutamate 173, histidine 176, glutamate 259, and histidine 262.

The protein belongs to the fatty acid desaturase type 2 family. As to quaternary structure, homodimer. Fe(2+) serves as cofactor.

Its subcellular location is the plastid. It localises to the chloroplast. It catalyses the reaction octadecanoyl-[ACP] + 2 reduced [2Fe-2S]-[ferredoxin] + O2 + 2 H(+) = (9Z)-octadecenoyl-[ACP] + 2 oxidized [2Fe-2S]-[ferredoxin] + 2 H2O. The protein operates within lipid metabolism; fatty acid metabolism. In terms of biological role, converts stearoyl-ACP to oleoyl-ACP by introduction of a cis double bond between carbons 9 and 10 of the acyl chain. The protein is Stearoyl-[acyl-carrier-protein] 9-desaturase, chloroplastic of Solanum tuberosum (Potato).